Consider the following 621-residue polypeptide: KIF-binding protein (621 aa).

A Phosphoserine modification is found at S178.

It belongs to the KIF-binding protein family. In terms of assembly, interacts with KIF1B; positively regulates KIF1B microtubule motor activity. Interacts with STMN2.

The protein resides in the cytoplasm. The protein localises to the cytoskeleton. In terms of biological role, activator of KIF1B plus-end-directed microtubule motor activity. Required for organization of axonal microtubules, and axonal outgrowth and maintenance during peripheral and central nervous system development. In Bos taurus (Bovine), this protein is KIF-binding protein (KIFBP).